A 95-amino-acid chain; its full sequence is Integration host factor subunit beta (95 aa).

The protein belongs to the bacterial histone-like protein family. In terms of assembly, heterodimer of an alpha and a beta chain.

Its function is as follows. This protein is one of the two subunits of integration host factor, a specific DNA-binding protein that functions in genetic recombination as well as in transcriptional and translational control. In Shewanella amazonensis (strain ATCC BAA-1098 / SB2B), this protein is Integration host factor subunit beta.